Reading from the N-terminus, the 412-residue chain is Argininosuccinate synthase (412 aa).

Residue 10–18 (AYSGGLDTS) participates in ATP binding. Residue Tyr-89 participates in L-citrulline binding. Gly-119 provides a ligand contact to ATP. Residues Thr-121, Asn-125, and Asp-126 each coordinate L-aspartate. Asn-125 is an L-citrulline binding site. The L-citrulline site is built by Arg-129, Ser-177, Glu-261, and Tyr-273.

It belongs to the argininosuccinate synthase family. Type 1 subfamily. In terms of assembly, homotetramer.

It localises to the cytoplasm. It carries out the reaction L-citrulline + L-aspartate + ATP = 2-(N(omega)-L-arginino)succinate + AMP + diphosphate + H(+). Its pathway is amino-acid biosynthesis; L-arginine biosynthesis; L-arginine from L-ornithine and carbamoyl phosphate: step 2/3. The protein is Argininosuccinate synthase of Bifidobacterium longum (strain DJO10A).